The chain runs to 190 residues: Vespryn-21 (190 aa).

Positions 1-20 (MLLFTLCFFADLENGGKALA) are cleaved as a signal peptide. Positions 21 to 127 (SPPGKWQKAD…LIWQRGLWFL (107 aa)) constitute a B30.2/SPRY domain. Residues 128–190 (QRLETDSDKL…LGGGVSLTNL (63 aa)) constitute a propeptide that is removed on maturation.

The protein belongs to the ohanin/vespryn family. In terms of tissue distribution, expressed by the venom gland.

It localises to the secreted. Functionally, neurotoxin that produces dose-dependent hypolocomotion and hyperalgesia in mice. May directly act on the central nervous system, as it is 6500-fold more potent when administered intracerebroventricularly than intraperitoneal. The protein is Vespryn-21 of Drysdalia coronoides (White-lipped snake).